Here is a 628-residue protein sequence, read N- to C-terminus: 1,4-alpha-glucan branching enzyme GlgB (628 aa).

Asp304 (nucleophile) is an active-site residue. The Proton donor role is filled by Glu355.

The protein belongs to the glycosyl hydrolase 13 family. GlgB subfamily. Monomer.

The enzyme catalyses Transfers a segment of a (1-&gt;4)-alpha-D-glucan chain to a primary hydroxy group in a similar glucan chain.. Its pathway is glycan biosynthesis; glycogen biosynthesis. Catalyzes the formation of the alpha-1,6-glucosidic linkages in glycogen by scission of a 1,4-alpha-linked oligosaccharide from growing alpha-1,4-glucan chains and the subsequent attachment of the oligosaccharide to the alpha-1,6 position. In Streptococcus mutans serotype c (strain ATCC 700610 / UA159), this protein is 1,4-alpha-glucan branching enzyme GlgB.